The sequence spans 448 residues: MLHRYLPMTEEDKQEMLKTIGVASIDELFADIPEQVRFRGELNVKRAKSEPELWKELSALADKNANARQYVSFLGAGVYDHYIPAVVDHVLMRSEFYTAYTPYQPEISQGELQAIFEFQTMVCELTGMDVANSSMYDGGTALAEAVLLSAAHTKRRKVLISNAVHPQYREVVRTYANGQRLEVKEIPYNGGVTDLEVLAAEMGDDVACVVIQYPNFFGQIEPLKAIEPLVHEKKSLFVVASNPLALGVLTPPGEFGADIVVGDMQPFGIPMQFGGPHCGYFAVKAPLMRKIPGRLVGQTTDEEGRRGFVLTLQAREQHIRRDKATSNICSNQALNALAASVALSALGKRGVKEMATMNMQKAHYAKSELQKRGLLSPFAGPFFNEFVIRLNQPVDDVNARLRQKGIIGGYNLGFDYPELANHMLVAVTELRTKEEIDRFVNELGDGHA.

The protein belongs to the GcvP family. N-terminal subunit subfamily. As to quaternary structure, the glycine cleavage system is composed of four proteins: P, T, L and H. In this organism, the P 'protein' is a heterodimer of two subunits.

It catalyses the reaction N(6)-[(R)-lipoyl]-L-lysyl-[glycine-cleavage complex H protein] + glycine + H(+) = N(6)-[(R)-S(8)-aminomethyldihydrolipoyl]-L-lysyl-[glycine-cleavage complex H protein] + CO2. In terms of biological role, the glycine cleavage system catalyzes the degradation of glycine. The P protein binds the alpha-amino group of glycine through its pyridoxal phosphate cofactor; CO(2) is released and the remaining methylamine moiety is then transferred to the lipoamide cofactor of the H protein. The polypeptide is Probable glycine dehydrogenase (decarboxylating) subunit 1 (Geobacillus thermodenitrificans (strain NG80-2)).